A 310-amino-acid polypeptide reads, in one-letter code: Homoserine kinase (310 aa).

Pro-91 to Cys-101 provides a ligand contact to ATP.

Belongs to the GHMP kinase family. Homoserine kinase subfamily.

It is found in the cytoplasm. It catalyses the reaction L-homoserine + ATP = O-phospho-L-homoserine + ADP + H(+). It participates in amino-acid biosynthesis; L-threonine biosynthesis; L-threonine from L-aspartate: step 4/5. Catalyzes the ATP-dependent phosphorylation of L-homoserine to L-homoserine phosphate. This chain is Homoserine kinase, found in Escherichia coli O6:H1 (strain CFT073 / ATCC 700928 / UPEC).